A 1029-amino-acid polypeptide reads, in one-letter code: Sodium/potassium-transporting ATPase subunit alpha-4 (1029 aa).

The interval 1–37 (MGLWGKKGTVAPHDQSPRRRPKKGLIKKKMVKREKQK) is disordered. At 1 to 95 (MGLWGKKGTV…NTVTPPPTTP (95 aa)) the chain is on the cytoplasmic side. Over residues 18-36 (RRRPKKGLIKKKMVKREKQ) the composition is skewed to basic residues. The segment at 90–92 (PPP) is interaction with phosphoinositide-3 kinase. Residues 96-116 (EWVKFCKQLFGGFSLLLWTGA) form a helical membrane-spanning segment. Residues 117–139 (ILCFVAYSIQIYFNEEPTKDNLY) are Extracellular-facing. A helical membrane pass occupies residues 140–160 (LSIVLSVVVIVTGCFSYYQEA). Over 161–296 (KSSKIMESFK…VGQTPIAAEI (136 aa)) the chain is Cytoplasmic. Residues 223 to 237 (NSSLTGESEPQSRSP) show a composition bias toward polar residues. A disordered region spans residues 223–242 (NSSLTGESEPQSRSPDFTHE). Residues 297 to 316 (EHFIHLITVVAVFLGVTFFA) traverse the membrane as a helical segment. Topologically, residues 317–328 (LSLLLGYGWLEA) are extracellular. Residues 329–346 (IIFLIGIIVANVPEGLLA) traverse the membrane as a helical segment. The Cytoplasmic portion of the chain corresponds to 347 to 778 (TVTVCLTLTA…EEGRLIFDNL (432 aa)). The 4-aspartylphosphate intermediate role is filled by Asp-384. Residues Asp-723 and Asp-727 each coordinate Mg(2+). Residues 779 to 798 (KKSIMYTLTSNIPEITPFLM) form a helical membrane-spanning segment. Residues 799–808 (FIILGIPLPL) lie on the Extracellular side of the membrane. Residues 809–829 (GTITILCIDLGTDMVPAISLA) traverse the membrane as a helical segment. At 830–849 (YESAESDIMKRLPRNPKTDN) the chain is on the cytoplasmic side. Residues 850 to 872 (LVNHRLIGMAYGQIGMIQALAGF) traverse the membrane as a helical segment. Residues 873-924 (FTYFVILAENGFRPVDLLGIRLHWEDKYLNDLEDSYGQQWTYEQRKVVEFTC) lie on the Extracellular side of the membrane. Residues 925–944 (QTAFFVTIVVVQWADLIISK) traverse the membrane as a helical segment. The Cytoplasmic segment spans residues 945–957 (TRRNSLFQQGMRN). Ser-949 is modified (phosphoserine; by PKA). Residues 958 to 976 (KVLIFGILEETLLAAFLSY) form a helical membrane-spanning segment. The Extracellular portion of the chain corresponds to 977 to 991 (TPGMDVALRMYPLKI). A helical membrane pass occupies residues 992-1012 (TWWLCAIPYSILIFVYDEIRK). Residues 1013–1029 (LLIRQHPDGWVERETYY) lie on the Cytoplasmic side of the membrane.

It belongs to the cation transport ATPase (P-type) (TC 3.A.3) family. Type IIC subfamily. The sodium/potassium-transporting ATPase is composed of a catalytic alpha subunit, an auxiliary non-catalytic beta subunit and an additional regulatory subunit. Specifically expressed in testis. Found in very low levels in skeletal muscle. Expressed in mature sperm (at protein level).

It localises to the cell membrane. The catalysed reaction is K(+)(out) + Na(+)(in) + ATP + H2O = K(+)(in) + Na(+)(out) + ADP + phosphate + H(+). Specifically inhibited by an endogenous cardiac glycoside, ouabain. In terms of biological role, this is the catalytic component of the active enzyme, which catalyzes the hydrolysis of ATP coupled with the exchange of sodium and potassium ions across the plasma membrane. This action creates the electrochemical gradient of sodium and potassium ions, providing the energy for active transport of various nutrients. Plays a role in sperm motility. The polypeptide is Sodium/potassium-transporting ATPase subunit alpha-4 (Homo sapiens (Human)).